Here is a 441-residue protein sequence, read N- to C-terminus: Chromosome partition protein MukF (441 aa).

Positions 208–236 are leucine-zipper; that stretch reads LTETSSTLRELQDTLEAAGDKLQTSLLSI.

Belongs to the MukF family. In terms of assembly, interacts, and probably forms a ternary complex, with MukE and MukB via its C-terminal region. The complex formation is stimulated by calcium or magnesium. It is required for an interaction between MukE and MukB.

The protein localises to the cytoplasm. It localises to the nucleoid. Functionally, involved in chromosome condensation, segregation and cell cycle progression. May participate in facilitating chromosome segregation by condensation DNA from both sides of a centrally located replisome during cell division. Not required for mini-F plasmid partitioning. Probably acts via its interaction with MukB and MukE. Overexpression results in anucleate cells. It has a calcium binding activity. The polypeptide is Chromosome partition protein MukF (Pectobacterium atrosepticum (strain SCRI 1043 / ATCC BAA-672) (Erwinia carotovora subsp. atroseptica)).